A 308-amino-acid chain; its full sequence is D-alanine--D-alanine ligase (308 aa).

Residues 100–295 (KEVFVRNGLP…FDGLIGRLIE (196 aa)) enclose the ATP-grasp domain. ATP is bound at residue 127-180 (PFAFPAFIKSNNGGSSLALHRVSCPGELARALDELFTRGGEAIIEPAVEGVEVT). Mg(2+)-binding residues include aspartate 249, glutamate 262, and asparagine 264.

It belongs to the D-alanine--D-alanine ligase family. Mg(2+) serves as cofactor. The cofactor is Mn(2+).

It localises to the cytoplasm. It carries out the reaction 2 D-alanine + ATP = D-alanyl-D-alanine + ADP + phosphate + H(+). It participates in cell wall biogenesis; peptidoglycan biosynthesis. In terms of biological role, cell wall formation. This is D-alanine--D-alanine ligase from Oleidesulfovibrio alaskensis (strain ATCC BAA-1058 / DSM 17464 / G20) (Desulfovibrio alaskensis).